Here is a 531-residue protein sequence, read N- to C-terminus: Probable calcium-binding mitochondrial carrier F17E5.2 (531 aa).

EF-hand domains lie at 70-105, 106-135, 136-171, and 172-207; these read EKEK…QAHI, PASV…NYVI, AHEA…MGVN, and LDDQ…YPST. Residues Asp-83, Asp-85, Asp-87, Ser-89, and Asp-94 each contribute to the Ca(2+) site. Residues Asp-149, Asn-151, Asp-153, Glu-155, and Glu-160 each coordinate Ca(2+). Solcar repeat units follow at residues 242–328, 338–424, and 435–525; these read GVWW…IKRW, LSTI…LKSM, and PGVL…VRKQ. Helical transmembrane passes span 248–265, 303–322, 348–361, 399–418, 441–458, and 500–517; these read LVAG…TAPF, GNGI…FMCY, SSAG…IYPM, GYLP…LTVY, LACG…SYPL, and GITP…ISYV.

This sequence belongs to the mitochondrial carrier (TC 2.A.29) family.

It is found in the mitochondrion inner membrane. Calcium-dependent mitochondrial solute carrier. This is Probable calcium-binding mitochondrial carrier F17E5.2 from Caenorhabditis elegans.